We begin with the raw amino-acid sequence, 167 residues long: Endoribonuclease YbeY (167 aa).

Residues His131, His135, and His141 each contribute to the Zn(2+) site.

It belongs to the endoribonuclease YbeY family. Zn(2+) serves as cofactor.

It is found in the cytoplasm. In terms of biological role, single strand-specific metallo-endoribonuclease involved in late-stage 70S ribosome quality control and in maturation of the 3' terminus of the 16S rRNA. The polypeptide is Endoribonuclease YbeY (Rickettsia rickettsii (strain Sheila Smith)).